A 724-amino-acid polypeptide reads, in one-letter code: MSFPKAPLKRFNDPSGCAPSPGAYDVKTLEVLKGPVSFQKSQRFKQQKESKQNLNVDKDTTLPASARKVKSSESKESQKNDKDLKILEKEIRVLLQERGAQDRRIQDLETELEKMEARLNAALREKTSLSANNATLEKQLIELTRTNELLKSKFSENGNQKNLRILSLELMKLRNKRETKMRGMMAKQEGMEMKLQVTQRSLEESQGKIAQLEGKLVSIEKEKIDEKSETEKLLEYIEEISCASDQVEKYKLDIAQLEENLKEKNDEILSLKQSLEENIVILSKQVEDLNVKCQLLEKEKEDHVNRNREHNENLNAEMQNLKQKFILEQQEREKLQQKELQIDSLLQQEKELSSSLHQKLCSFQEEMVKEKNLFEEELKQTLDELDKLQQKEEQAERLVKQLEEEAKSRAEELKLLEEKLKGKEAELEKSSAAHTQATLLLQEKYDSMVQSLEDVTAQFESYKALTASEIEDLKLENSSLQEKAAKAGKNAEDVQHQILATESSNQEYVRMLLDLQTKSALKETEIKEITVSFLQKITDLQNQLKQQEEDFRKQLEDEEGRKAEKENTTAELTEEINKWRLLYEELYNKTKPFQLQLDAFEVEKQALLNEHGAAQEQLNKIRDSYAKLLGHQNLKQKIKHVVKLKDENSQLKSEVSKLRCQLAKKKQSETKLQEELNKVLGIKHFDPSKAFHHESKENFALKTPLKEGNTNCYRAPMECQESWK.

Disordered regions lie at residues 1 to 22 (MSFPKAPLKRFNDPSGCAPSPG) and 40 to 81 (KSQR…QKND). The residue at position 20 (Ser20) is a Phosphoserine. Basic and acidic residues-rich tracts occupy residues 46 to 60 (QQKESKQNLNVDKDT) and 70 to 81 (KSSESKESQKND). N-linked (GlcNAc...) asparagine glycosylation is found at Asn133, Asn477, Asn567, and Asn588. The tract at residues 365 to 546 (EEMVKEKNLF…ITDLQNQLKQ (182 aa)) is required for interaction with FAM83D. Hyaluronic acid-binding regions lie at residues 635–645 (KQKIKHVVKLK) and 657–666 (KLRCQLAKKK). Phosphothreonine is present on Thr703.

Interacts with ANKRD26. Interacts with DYNLL1. Interacts with FAM83D/CHICA. In terms of tissue distribution, expressed in testis. Expressed in the breast.

Its subcellular location is the cell surface. The protein localises to the cytoplasm. It is found in the cytoskeleton. It localises to the spindle. In terms of biological role, receptor for hyaluronic acid (HA). Involved in cell motility. When hyaluronan binds to HMMR, the phosphorylation of a number of proteins, including PTK2/FAK1 occurs. May also be involved in cellular transformation and metastasis formation, and in regulating extracellular-regulated kinase (ERK) activity. May act as a regulator of adipogenisis. The polypeptide is Hyaluronan mediated motility receptor (HMMR) (Homo sapiens (Human)).